The chain runs to 409 residues: MAPPAGGTAAGSDPGSAAVLLAVHVAVRPLGAGLDVAAQPRRLQLSADPERPGRFRLEMLGAGPGAVILEWPLESVSYTVRGPCQHELQPPPGGPGTLSLHFANPQEAQRWAALVRDATVEGQNGSDSLPPALGPETRPVSPPSPLEVPTPKAPKPKVDLPWSPGDLMEKEELAGRLTRAVEGGDEKGAAQAAAILAQRHVALRVQLQEAYFPPGPIRLQVTVEDAASSAHVSLQVHPHCTIRALQEQVFSEFGFPPAVQRWVIGRCLCVPEHSLAFYGVQRDGDPAFLYLLSAPREAPGRSPQRPQKVDGELGRLFPQSLGLPPTPQPTSSSLPSPLQPGWPCPSCTFINAPSRPGCEMCSTQRPCAWDPLPTASIQQLPKVTRREDGPSLPGPRSLDPLLNLSGNLC.

Residues 1-178 are self-association; it reads MAPPAGGTAA…EKEELAGRLT (178 aa). Residues 121–164 are disordered; the sequence is EGQNGSDSLPPALGPETRPVSPPSPLEVPTPKAPKPKVDLPWSP. Over residues 140 to 153 the composition is skewed to pro residues; the sequence is VSPPSPLEVPTPKA. Residue Ser163 is modified to Phosphoserine. Positions 173 to 300 are interaction with SHANK1; sequence LAGRLTRAVE…LLSAPREAPG (128 aa). The Ubiquitin-like domain maps to 217-280; the sequence is IRLQVTVEDA…PEHSLAFYGV (64 aa). Phosphoserine is present on Ser302. Residues 315–337 form a disordered region; it reads RLFPQSLGLPPTPQPTSSSLPSP. Residues 318 to 336 are compositionally biased toward low complexity; the sequence is PQSLGLPPTPQPTSSSLPS. The RanBP2-type zinc-finger motif lies at 338–367; the sequence is LQPGWPCPSCTFINAPSRPGCEMCSTQRPC. The disordered stretch occupies residues 384-409; that stretch reads TRREDGPSLPGPRSLDPLLNLSGNLC.

Monomer and homodimer. Component of the LUBAC complex (linear ubiquitin chain assembly complex) which consists of SHARPIN, RBCK1 and RNF31. LUBAC has a MW of approximately 600 kDa suggesting a heteromultimeric assembly of its subunits. Associates with the TNF-R1 signaling complex (TNF-RSC) in a stimulation-dependent manner. Interacts with EYA1, EYA2, SHANK1 and SHANK3 (via ANK repeats).

The protein localises to the cytoplasm. Its subcellular location is the cytosol. It localises to the synapse. Its pathway is protein modification; protein ubiquitination. In terms of biological role, component of the LUBAC complex which conjugates linear polyubiquitin chains in a head-to-tail manner to substrates and plays a key role in NF-kappa-B activation and regulation of inflammation. LUBAC conjugates linear polyubiquitin to IKBKG and RIPK1 and is involved in activation of the canonical NF-kappa-B and the JNK signaling pathways. Linear ubiquitination mediated by the LUBAC complex interferes with TNF-induced cell death and thereby prevents inflammation. LUBAC is recruited to the TNF-R1 signaling complex (TNF-RSC) following polyubiquitination of TNF-RSC components by BIRC2 and/or BIRC3 and to conjugate linear polyubiquitin to IKBKG and possibly other components contributing to the stability of the complex. The LUBAC complex is also involved in innate immunity by conjugating linear polyubiquitin chains at the surface of bacteria invading the cytosol to form the ubiquitin coat surrounding bacteria. LUBAC is not able to initiate formation of the bacterial ubiquitin coat, and can only promote formation of linear polyubiquitins on pre-existing ubiquitin. The bacterial ubiquitin coat acts as an 'eat-me' signal for xenophagy and promotes NF-kappa-B activation. Together with OTULIN, the LUBAC complex regulates the canonical Wnt signaling during angiogenesis. This Bos taurus (Bovine) protein is Sharpin (SHARPIN).